Here is a 321-residue protein sequence, read N- to C-terminus: Tetraacyldisaccharide 4'-kinase (321 aa).

ATP is bound at residue 54 to 61 (SVGGTGKT).

This sequence belongs to the LpxK family.

The enzyme catalyses a lipid A disaccharide + ATP = a lipid IVA + ADP + H(+). Its pathway is glycolipid biosynthesis; lipid IV(A) biosynthesis; lipid IV(A) from (3R)-3-hydroxytetradecanoyl-[acyl-carrier-protein] and UDP-N-acetyl-alpha-D-glucosamine: step 6/6. Functionally, transfers the gamma-phosphate of ATP to the 4'-position of a tetraacyldisaccharide 1-phosphate intermediate (termed DS-1-P) to form tetraacyldisaccharide 1,4'-bis-phosphate (lipid IVA). The chain is Tetraacyldisaccharide 4'-kinase from Rickettsia rickettsii.